We begin with the raw amino-acid sequence, 244 residues long: 5-oxoprolinase subunit A (244 aa).

Belongs to the LamB/PxpA family. In terms of assembly, forms a complex composed of PxpA, PxpB and PxpC.

It carries out the reaction 5-oxo-L-proline + ATP + 2 H2O = L-glutamate + ADP + phosphate + H(+). Its function is as follows. Catalyzes the cleavage of 5-oxoproline to form L-glutamate coupled to the hydrolysis of ATP to ADP and inorganic phosphate. The polypeptide is 5-oxoprolinase subunit A (Salmonella paratyphi A (strain ATCC 9150 / SARB42)).